We begin with the raw amino-acid sequence, 617 residues long: Vacuolar protein sorting-associated protein 33B (617 aa).

It belongs to the STXBP/unc-18/SEC1 family. In terms of assembly, probable core component of the class C core vacuole/endosome tethering (CORVET) complex. The common core is composed of the class C Vps proteins vps-11, vps-16 and vps-18, and which further associates with vps-8 and vps-33.2. Interacts with spe-39. As to expression, broadly expressed in somatic tissues including the pharynx, intestine, spermatheca, and in coelomocytes. Expressed in the lining of the gut lumen.

It localises to the early endosome. The protein resides in the late endosome membrane. The protein localises to the lysosome membrane. It is found in the cytoplasmic vesicle. Its subcellular location is the clathrin-coated vesicle. It localises to the recycling endosome. In terms of biological role, plays a role in vesicle-mediated protein trafficking to lysosomal compartments and in membrane docking/fusion reactions of late endosomes/lysosomes. Believed to act as a component of the putative CORVET endosomal tethering complex which is proposed to be involved in the rab-5-to-rab-7 endosome conversion probably implicating sand-1, and via binding SNAREs and SNARE complexes to mediate tethering and docking events during SNARE-mediated membrane fusion. The CORVET complex is proposed to function as a rab-5 effector to mediate early endosome fusion probably in specific endosome subpopulations. Most likely within the CORVET complex, it is involved in the fusion of endocytic compartments. Required for sperm development and function. This chain is Vacuolar protein sorting-associated protein 33B, found in Caenorhabditis elegans.